The chain runs to 108 residues: Tyrosine-protein phosphatase 5 (108 aa).

The Tyrosine-protein phosphatase domain maps to 1–108 (QESTVIVMLT…QGNNPSPIIV (108 aa)). Residue aspartate 78 participates in substrate binding.

This sequence belongs to the protein-tyrosine phosphatase family.

It carries out the reaction O-phospho-L-tyrosyl-[protein] + H2O = L-tyrosyl-[protein] + phosphate. This Styela plicata (Wrinkled sea squirt) protein is Tyrosine-protein phosphatase 5 (STY-5).